Reading from the N-terminus, the 489-residue chain is FAD-containing monooxygenase EthA (489 aa).

FAD-binding positions include Ser-15, Glu-36, 44–47, Asp-56, and Val-104; that span reads TWDL. An NADP(+)-binding site is contributed by 54 to 56; the sequence is RSD. NADP(+)-binding positions include 183–189 and 207–208; these read SGATAVT and RS.

The protein belongs to the FAD-binding monooxygenase family. Requires FAD as cofactor.

The protein localises to the cell membrane. It catalyses the reaction ethionamide + NADPH + O2 + H(+) = ethionamide S-oxide + NADP(+) + H2O. Monooxygenase able to convert a wide range of ketones to the corresponding esters or lactones via a Baeyer-Villiger oxidation reaction. Can act on long-chain aliphatic ketones (2-hexanone to 2-dodecanone) and on aromatic ketones (phenylacetone and benzylacetone). Is also able to catalyze enantioselective sulfoxidation of methyl-p-tolylsulfide. In vivo, likely functions as a BVMO, but the exact nature of the physiological substrate(s) remains to be established. In terms of biological role, is responsible for the activation of several thiocarbamide-containing pro-drugs, such as ethionamide (ETH), isoxyl (ISO) and thiacetazone (TAC), into reactive species. In Mycobacterium bovis (strain ATCC BAA-935 / AF2122/97), this protein is FAD-containing monooxygenase EthA (ethA).